We begin with the raw amino-acid sequence, 527 residues long: Cytochrome P450 714B3 (527 aa).

Residues 1 to 14 (MEVAMAMAVKVLLS) are Lumenal-facing. A helical; Signal-anchor for type III membrane protein transmembrane segment spans residues 15 to 35 (LCCVGACGLAVYLYHILWLVP). Topologically, residues 36-527 (QKVLAKFEDQ…SVCTKRGTAI (492 aa)) are cytoplasmic. A heme-binding site is contributed by Cys-464.

It belongs to the cytochrome P450 family. It depends on heme as a cofactor.

The protein resides in the membrane. Functionally, may be involved in gibberellin metabolism. The protein is Cytochrome P450 714B3 (CYP714B3) of Zea mays (Maize).